We begin with the raw amino-acid sequence, 550 residues long: Transcription factor p65 (550 aa).

Met-1 carries the N-acetylmethionine modification. The 175-residue stretch at 16 to 190 folds into the RHD domain; that stretch reads ASGPYVEIIE…HPIFDNRAPN (175 aa). Lys-37 is covalently cross-linked (Glycyl lysine isopeptide (Lys-Gly) (interchain with G-Cter in SUMO3)). Cys-38 carries the cysteine persulfide; alternate modification. The residue at position 38 (Cys-38) is an S-nitrosocysteine; alternate. 4 positions are modified to N6-acetyllysine: Lys-122, Lys-123, Lys-218, and Lys-221. Residues Lys-122 and Lys-123 each participate in a glycyl lysine isopeptide (Lys-Gly) (interchain with G-Cter in SUMO3); alternate cross-link. Thr-254 carries the phosphothreonine modification. Residues Ser-276 and Ser-281 each carry the phosphoserine modification. The Nuclear localization signal signature appears at 301-304; the sequence is KRKR. Position 310 is an N6-acetyllysine; alternate (Lys-310). Position 310 is an N6-methyllysine (Lys-310). Ser-311 bears the Phosphoserine mark. Transcriptional activation domain stretches follow at residues 342–388 and 414–476; these read PKPA…APVL and PGPP…EFQQ. Thr-434 is modified (phosphothreonine). Ser-468 carries the post-translational modification Phosphoserine. The residue at position 505 (Thr-505) is a Phosphothreonine. The segment at 520–550 is transcriptional activation domain 2; that stretch reads TSGLPNGLSGDEDFSSIADMDFSALLSQISS. Position 535 is a phosphoserine (Ser-535). A 9aaTAD motif is present at residues 535-543; that stretch reads SIADMDFSA.

Component of the NF-kappa-B p65-p50 complex. Component of the NF-kappa-B p65-c-Rel complex. Homodimer; component of the NF-kappa-B p65-p65 complex. Component of the NF-kappa-B p65-p52 complex. May interact with ETHE1. Binds TLE5 and TLE1. Interacts with TP53BP2. Binds to and is phosphorylated by the activated form of either RPS6KA4 or RPS6KA5. Interacts with ING4 and this interaction may be indirect. Interacts with CARM1, USP48 and UNC5CL. Interacts with IRAK1BP1. Interacts with NFKBID. Interacts with NFKBIA. Interacts with GSK3B. Interacts with NFKBIB. Interacts with NFKBIE. Interacts with NFKBIZ. Interacts with EHMT1 (via ANK repeats). Part of a 70-90 kDa complex at least consisting of CHUK, IKBKB, NFKBIA, RELA, ELP1 and MAP3K14. Interacts with HDAC3; HDAC3 mediates the deacetylation of RELA. Interacts with HDAC1; the interaction requires non-phosphorylated RELA. Interacts with CBP; the interaction requires phosphorylated RELA. Interacts (phosphorylated at 'Thr-254') with PIN1; the interaction inhibits p65 binding to NFKBIA. Interacts with SOCS1. Interacts with UXT. Interacts with MTDH and PHF11. Interacts with ARRB2. Interacts with NFKBIA (when phosphorylated), the interaction is direct; phosphorylated NFKBIA is part of a SCF(BTRC)-like complex lacking CUL1. Interacts with RNF25. Interacts (via C-terminus) with DDX1. Interacts with UFL1 and COMMD1. Interacts with BRMS1; this promotes deacetylation of 'Lys-310'. Interacts with NOTCH2. Directly interacts with MEN1; this interaction represses NFKB-mediated transactivation. Interacts with AKIP1, which promotes the phosphorylation and nuclear retention of RELA. Interacts (via the RHD) with GFI1; the interaction, after bacterial lipopolysaccharide (LPS) stimulation, inhibits the transcriptional activity by interfering with the DNA-binding activity to target gene promoter DNA. Interacts (when acetylated at Lys-310) with BRD4; leading to activation of the NF-kappa-B pathway. Interacts with MEFV. Interacts with CLOCK. Interacts (via N-terminus) with CPEN1; this interaction induces proteolytic cleavage of p65/RELA subunit and inhibition of NF-kappa-B transcriptional activity. Interacts with FOXP3. Interacts with CDK5RAP3; stimulates the interaction of RELA with HDAC1, HDAC2 and HDAC3 thereby inhibiting NF-kappa-B transcriptional activity. Interacts with DHX9; this interaction is direct and activates NF-kappa-B-mediated transcription. Interacts with LRRC25. Interacts with TBX21. Interacts with KAT2A. Interacts with ZBTB7A; involved in the control by RELA of the accessibility of target gene promoters. Directly interacts with DDX3X; this interaction may trap RELA in the cytoplasm, impairing nuclear relocalization upon TNF activating signals. Interacts with PHF2. Interacts with MKRN2; the interaction leads to its polyubiquitination and proteasome-dependent degradation. Interacts with ECSIT. Interacts with RAB28; the interaction contributes to RELA transport from cytoplasm to nucleus. In terms of processing, ubiquitinated by RNF182, leading to its proteasomal degradation. Degradation is required for termination of NF-kappa-B response. Polyubiquitinated via 'Lys-29'-linked ubiquitin; leading to lysosomal degradation. Post-translationally, monomethylated at Lys-310 by SETD6. Monomethylation at Lys-310 is recognized by the ANK repeats of EHMT1 and promotes the formation of repressed chromatin at target genes, leading to down-regulation of NF-kappa-B transcription factor activity. Phosphorylation at Ser-311 disrupts the interaction with EHMT1 without preventing monomethylation at Lys-310 and relieves the repression of target genes. Phosphorylation at Ser-311 disrupts the interaction with EHMT1 and promotes transcription factor activity. Phosphorylation on Ser-535 stimulates acetylation on Lys-310 and interaction with CBP; the phosphorylated and acetylated forms show enhanced transcriptional activity. Phosphorylation at Ser-276 by RPS6KA4 and RPS6KA5 promotes its transactivation and transcriptional activities. In terms of processing, phosphorylation at Ser-75 by herpes simplex virus 1/HHV-1 inhibits NF-kappa-B activation. Post-translationally, reversibly acetylated; the acetylation seems to be mediated by CBP, the deacetylation by HDAC3 and SIRT2. Acetylation at Lys-122 enhances DNA binding and impairs association with NFKBIA. Acetylation at Lys-310 is required for full transcriptional activity in the absence of effects on DNA binding and NFKBIA association. Acetylation at Lys-310 promotes interaction with BRD4. Acetylation can also lower DNA-binding and results in nuclear export. Interaction with BRMS1 promotes deacetylation of Lys-310. Lys-310 is deacetylated by SIRT2. S-nitrosylation of Cys-38 inactivates the enzyme activity. In terms of processing, sulfhydration at Cys-38 mediates the anti-apoptotic activity by promoting the interaction with RPS3 and activating the transcription factor activity. Post-translationally, sumoylation by PIAS3 negatively regulates DNA-bound activated NF-kappa-B. Proteolytically cleaved within a conserved N-terminus region required for base-specific contact with DNA in a CPEN1-mediated manner, and hence inhibits NF-kappa-B transcriptional activity.

The protein localises to the nucleus. It localises to the cytoplasm. NF-kappa-B is a pleiotropic transcription factor present in almost all cell types and is the endpoint of a series of signal transduction events that are initiated by a vast array of stimuli related to many biological processes such as inflammation, immunity, differentiation, cell growth, tumorigenesis and apoptosis. NF-kappa-B is a homo- or heterodimeric complex formed by the Rel-like domain-containing proteins RELA/p65, RELB, NFKB1/p105, NFKB1/p50, REL and NFKB2/p52. The heterodimeric RELA-NFKB1 complex appears to be most abundant one. The dimers bind at kappa-B sites in the DNA of their target genes and the individual dimers have distinct preferences for different kappa-B sites that they can bind with distinguishable affinity and specificity. Different dimer combinations act as transcriptional activators or repressors, respectively. The NF-kappa-B heterodimeric RELA-NFKB1 and RELA-REL complexes, for instance, function as transcriptional activators. NF-kappa-B is controlled by various mechanisms of post-translational modification and subcellular compartmentalization as well as by interactions with other cofactors or corepressors. NF-kappa-B complexes are held in the cytoplasm in an inactive state complexed with members of the NF-kappa-B inhibitor (I-kappa-B) family. In a conventional activation pathway, I-kappa-B is phosphorylated by I-kappa-B kinases (IKKs) in response to different activators, subsequently degraded thus liberating the active NF-kappa-B complex which translocates to the nucleus. The inhibitory effect of I-kappa-B on NF-kappa-B through retention in the cytoplasm is exerted primarily through the interaction with RELA. RELA shows a weak DNA-binding site which could contribute directly to DNA binding in the NF-kappa-B complex. Besides its activity as a direct transcriptional activator, it is also able to modulate promoters accessibility to transcription factors and thereby indirectly regulate gene expression. Associates with chromatin at the NF-kappa-B promoter region via association with DDX1. Essential for cytokine gene expression in T-cells. The NF-kappa-B homodimeric RELA-RELA complex appears to be involved in invasin-mediated activation of IL-8 expression. Key transcription factor regulating the IFN response during SARS-CoV-2 infection. This chain is Transcription factor p65, found in Rattus norvegicus (Rat).